A 375-amino-acid chain; its full sequence is MEVKVRRDELVPFVAMAIMEACTIALTIMAKTALTGGMSPFVFVVYTNAFGSILLLPFSFLFHRNERTEQSIFSWPLLVRVFFLGFTGIFMFQNLAFVGLRFSSPIVVCAMGLQIPSFSFLLSIILGRSKLDWRNTSTRAKLMGTIVSLSGAFVEELYKGPFIRPASSASPNRFLKSVPKLLVYYNLPDNWFLGCIFLAVAVFSVSLFNVVQTGTVKKYPHVMKVASFYSIVGTIQCLLFSLFMERDLSAWKIQPNFDLYLIIATGTFGSVIRTSVHVKCTQMKGPYYVPLFKPFGIFWATLFGTSFFVNSLHYGSVLGAAIAGVGYFTVSWGQLKESEEKQSSNEERKSIKTIHHRDEDEYKVPLLINQEESPV.

Helical transmembrane passes span 10 to 30, 41 to 61, 72 to 92, 106 to 126, 143 to 163, 191 to 211, 225 to 245, 259 to 278, 289 to 309, and 312 to 332; these read LVPFVAMAIMEACTIALTIMA, FVFVVYTNAFGSILLLPFSFL, IFSWPLLVRVFFLGFTGIFMF, IVVCAMGLQIPSFSFLLSIIL, MGTIVSLSGAFVEELYKGPFI, WFLGCIFLAVAVFSVSLFNVV, VASFYSIVGTIQCLLFSLFME, LYLIIATGTFGSVIRTSVHV, VPLFKPFGIFWATLFGTSFFV, and LHYGSVLGAAIAGVGYFTVSW. In terms of domain architecture, EamA spans 25 to 134; that stretch reads ALTIMAKTAL…ILGRSKLDWR (110 aa). Positions 337–356 are disordered; the sequence is ESEEKQSSNEERKSIKTIHH.

The protein belongs to the drug/metabolite transporter (DMT) superfamily. Plant drug/metabolite exporter (P-DME) (TC 2.A.7.4) family.

It is found in the membrane. The sequence is that of WAT1-related protein At1g70260 from Arabidopsis thaliana (Mouse-ear cress).